We begin with the raw amino-acid sequence, 125 residues long: UPF0102 protein Mpop_0474 (125 aa).

The protein belongs to the UPF0102 family.

The polypeptide is UPF0102 protein Mpop_0474 (Methylorubrum populi (strain ATCC BAA-705 / NCIMB 13946 / BJ001) (Methylobacterium populi)).